Reading from the N-terminus, the 117-residue chain is Conotoxin vil14a (117 aa).

An N-terminal signal peptide occupies residues 1–22 (MGFRVLVLVVMATTSALPFTFS). Residues 23–90 (EEPGRSPFRP…FAETPVGQKR (68 aa)) constitute a propeptide that is removed on maturation. The interval 53 to 86 (RADGQPPDMRQPEMRRPEMRRPEVRQPEFAETPV) is disordered. Basic and acidic residues predominate over residues 62-80 (RQPEMRRPEMRRPEVRQPE). 2 disulfide bridges follow: C96–C116 and C100–C112.

The protein belongs to the conotoxin R superfamily. In terms of tissue distribution, expressed by the venom duct.

It localises to the secreted. The polypeptide is Conotoxin vil14a (Conus villepinii (Villepin's cone)).